Reading from the N-terminus, the 156-residue chain is MKIQLIAVGTKMPKWVEEGFQEYRRRFPHDMPLELVEISAGKRGKNADIARILQKEGEAMLAAVPKGNRIVTLDIPGKKWDTPQLAEQLEAWKLDGRDVSILIGGPEGLAPACKAAADQSWSLSALTLPHPLVRIVMAESLYRAWSITANHPYHRE.

S-adenosyl-L-methionine contacts are provided by residues L73, G104, and 123 to 128 (LSALTL).

The protein belongs to the RNA methyltransferase RlmH family. As to quaternary structure, homodimer.

Its subcellular location is the cytoplasm. It catalyses the reaction pseudouridine(1915) in 23S rRNA + S-adenosyl-L-methionine = N(3)-methylpseudouridine(1915) in 23S rRNA + S-adenosyl-L-homocysteine + H(+). In terms of biological role, specifically methylates the pseudouridine at position 1915 (m3Psi1915) in 23S rRNA. The chain is Ribosomal RNA large subunit methyltransferase H from Vibrio parahaemolyticus serotype O3:K6 (strain RIMD 2210633).